We begin with the raw amino-acid sequence, 253 residues long: 5-oxoprolinase subunit A (253 aa).

Belongs to the LamB/PxpA family. As to quaternary structure, forms a complex composed of PxpA, PxpB and PxpC.

It catalyses the reaction 5-oxo-L-proline + ATP + 2 H2O = L-glutamate + ADP + phosphate + H(+). Functionally, catalyzes the cleavage of 5-oxoproline to form L-glutamate coupled to the hydrolysis of ATP to ADP and inorganic phosphate. The chain is 5-oxoprolinase subunit A from Shouchella clausii (strain KSM-K16) (Alkalihalobacillus clausii).